The sequence spans 762 residues: ATP-dependent RNA helicase SUV3 homolog, mitochondrial (762 aa).

A mitochondrion-targeting transit peptide spans 1–36 (MQNTRRCISLICVTRQPPSLRATYGAVAAARCLHRA). One can recognise a Helicase ATP-binding domain in the interval 181–321 (NARALTRKIV…ALELLQKICE (141 aa)). Residue 194–201 (GPTNSGKT) participates in ATP binding. The 178-residue stretch at 331–508 (RYDRLTELTV…PTADQIELYA (178 aa)) folds into the Helicase C-terminal domain. Residues 716–762 (EWDAQQVGQAAAASTSSKESQESPPDDSDDEDSYPGSYKKTRRKRRK) are disordered. Residues 721–730 (QVGQAAAAST) are compositionally biased toward polar residues. Over residues 739–748 (PPDDSDDEDS) the composition is skewed to acidic residues.

Belongs to the helicase family. Mg(2+) serves as cofactor. It depends on Mn(2+) as a cofactor.

The protein localises to the mitochondrion. The enzyme catalyses ATP + H2O = ADP + phosphate + H(+). Its function is as follows. Major helicase player in mitochondrial RNA metabolism and maintenance. Likely component of the mitochondrial degradosome (mtEXO) complex, that degrades 3' overhang double-stranded RNA with a 3'-to-5' directionality in an ATP-dependent manner. ATPase and ATP-dependent multisubstrate helicase, able to unwind double-stranded (ds) DNA and RNA, and RNA/DNA heteroduplexes in the 5'-to-3' direction. Regulates mRNA stability and is required for the correct processing and maturation of mitochondrial transcripts. The polypeptide is ATP-dependent RNA helicase SUV3 homolog, mitochondrial (Drosophila pseudoobscura pseudoobscura (Fruit fly)).